Reading from the N-terminus, the 243-residue chain is Phosphoribosylaminoimidazole-succinocarboxamide synthase (243 aa).

This sequence belongs to the SAICAR synthetase family.

It catalyses the reaction 5-amino-1-(5-phospho-D-ribosyl)imidazole-4-carboxylate + L-aspartate + ATP = (2S)-2-[5-amino-1-(5-phospho-beta-D-ribosyl)imidazole-4-carboxamido]succinate + ADP + phosphate + 2 H(+). It functions in the pathway purine metabolism; IMP biosynthesis via de novo pathway; 5-amino-1-(5-phospho-D-ribosyl)imidazole-4-carboxamide from 5-amino-1-(5-phospho-D-ribosyl)imidazole-4-carboxylate: step 1/2. The protein is Phosphoribosylaminoimidazole-succinocarboxamide synthase of Methanobrevibacter smithii (strain ATCC 35061 / DSM 861 / OCM 144 / PS).